The following is a 286-amino-acid chain: MNAYQKTIGRAVTLSGVGIHGGAPASARLLPADADTGILFQRSDIKDSAPVCAHVSQIGATDLCTSLGAREARIDTVEHLMAAISALGIDNLVVEIEGPEVPILDGTSARFIEAVDSVGVVTQDAKRRFIRILKTVRVEAGNSWGEFRPYDGTRFEVEIDFECPLIGRQKFAHDVDEETFRKELSTARTFGFMKDVERLWAAGLALGASLDNSLVIGDDNSIVNADGLRFKDEFVRHKTLDAVGDLALAGLPFIGCFSSYRGGHRLNSEAVKALLSDETAFEIIEA.

Positions 79, 237, and 241 each coordinate Zn(2+). Histidine 264 (proton donor) is an active-site residue.

Belongs to the LpxC family. Zn(2+) is required as a cofactor.

The catalysed reaction is a UDP-3-O-[(3R)-3-hydroxyacyl]-N-acetyl-alpha-D-glucosamine + H2O = a UDP-3-O-[(3R)-3-hydroxyacyl]-alpha-D-glucosamine + acetate. It functions in the pathway glycolipid biosynthesis; lipid IV(A) biosynthesis; lipid IV(A) from (3R)-3-hydroxytetradecanoyl-[acyl-carrier-protein] and UDP-N-acetyl-alpha-D-glucosamine: step 2/6. In terms of biological role, catalyzes the hydrolysis of UDP-3-O-myristoyl-N-acetylglucosamine to form UDP-3-O-myristoylglucosamine and acetate, the committed step in lipid A biosynthesis. This chain is UDP-3-O-acyl-N-acetylglucosamine deacetylase, found in Brucella melitensis biotype 2 (strain ATCC 23457).